We begin with the raw amino-acid sequence, 100 residues long: Urease subunit gamma (100 aa).

The protein belongs to the urease gamma subunit family. As to quaternary structure, heterotrimer of UreA (gamma), UreB (beta) and UreC (alpha) subunits. Three heterotrimers associate to form the active enzyme.

The protein localises to the cytoplasm. The enzyme catalyses urea + 2 H2O + H(+) = hydrogencarbonate + 2 NH4(+). Its pathway is nitrogen metabolism; urea degradation; CO(2) and NH(3) from urea (urease route): step 1/1. The protein is Urease subunit gamma of Sinorhizobium fredii (strain NBRC 101917 / NGR234).